We begin with the raw amino-acid sequence, 112 residues long: UPF0060 membrane protein Mpe_A1656 (112 aa).

A run of 4 helical transmembrane segments spans residues 9 to 29 (GLFF…WLVL), 34 to 54 (SAWL…LLTL), 65 to 85 (AYGG…DGVV), and 91 to 111 (LVGG…PRAA).

It belongs to the UPF0060 family.

It is found in the cell inner membrane. The chain is UPF0060 membrane protein Mpe_A1656 from Methylibium petroleiphilum (strain ATCC BAA-1232 / LMG 22953 / PM1).